A 323-amino-acid polypeptide reads, in one-letter code: MAAELSMGPELPTSPLAMEYVNDFDLLKFDVKKEPLGRAERPGRPCTRLQPAGSLSSTPLSTPCSSVPSSPSFSPTEQKTHLEDLYWMASNYQQMNPEALNLTPEDAVEALIGSHPVPQPLQSFDSFRGAHHHHHHHHPHPHHAYPGAGVAHDELGPHAHPHHHHHHQASPPPSSAASPAQQLPTSHPGPGPHATASATAAGGNGSVEDRFSDDQLVSMSVRELNRHLRGFTKDEVIRLKQKRRTLKNRGYAQSCRYKRVQQKHHLENEKTQLIQQVEQLKQEVSRLARERDAHKVKCEKLANSGFREAGSTSDSPSSPEFFL.

K32 participates in a covalent cross-link: Glycyl lysine isopeptide (Lys-Gly) (interchain with G-Cter in SUMO). Positions 34–43 (EPLGRAERPG) are enriched in basic and acidic residues. Disordered regions lie at residues 34–78 (EPLG…PTEQ) and 116–210 (PVPQ…VEDR). Positions 54–76 (SLSSTPLSTPCSSVPSSPSFSPT) are enriched in low complexity. Basic residues-rich tracts occupy residues 129 to 143 (GAHH…HPHH) and 159 to 168 (AHPHHHHHHQ). Positions 192–201 (PHATASATAA) are enriched in low complexity. Residues 238-263 (RLKQKRRTLKNRGYAQSCRYKRVQQK) form a basic motif region. One can recognise a bZIP domain in the interval 238 to 301 (RLKQKRRTLK…DAHKVKCEKL (64 aa)). The interval 266-287 (LENEKTQLIQQVEQLKQEVSRL) is leucine-zipper. Residue K297 forms a Glycyl lysine isopeptide (Lys-Gly) (interchain with G-Cter in SUMO) linkage.

This sequence belongs to the bZIP family. Maf subfamily. As to quaternary structure, homodimer or heterodimer with other bHLH-Zip transcription factors. Binds DNA as a homodimer or a heterodimer. Forms homodimers and heterodimers with FOS, FOSB and FOSL2, but not with JUN proteins (JUN, JUNB and JUND). Interacts with PAX6; the interaction is direct. Interacts with ETS1 and LRP1. Interacts with the intracellular cytoplasmic domain of LRP1 (LRPICD); the interaction results in a moderate reduction of MAFB transcriptional potential. Sumoylated. Sumoylation on Lys-32 and Lys-297 stimulates its transcriptional repression activity and promotes macrophage differentiation from myeloid progenitors.

The protein localises to the nucleus. Functionally, acts as a transcriptional activator or repressor. Plays a pivotal role in regulating lineage-specific hematopoiesis by repressing ETS1-mediated transcription of erythroid-specific genes in myeloid cells. Required for monocytic, macrophage, osteoclast, podocyte and islet beta cell differentiation. Involved in renal tubule survival and F4/80 maturation. Activates the insulin and glucagon promoters. Together with PAX6, transactivates weakly the glucagon gene promoter through the G1 element. SUMO modification controls its transcriptional activity and ability to specify macrophage fate. Binds element G1 on the glucagon promoter. Involved either as an oncogene or as a tumor suppressor, depending on the cell context. Required for the transcriptional activation of HOXB3 in the rhombomere r5 in the hindbrain. The chain is Transcription factor MafB (MAFB) from Macaca fascicularis (Crab-eating macaque).